The sequence spans 504 residues: Probable alpha-L-arabinofuranosidase C (504 aa).

N-linked (GlcNAc...) asparagine glycans are attached at residues Asn152, Asn181, Asn269, and Asn467.

The protein belongs to the glycosyl hydrolase 51 family.

It is found in the secreted. The enzyme catalyses Hydrolysis of terminal non-reducing alpha-L-arabinofuranoside residues in alpha-L-arabinosides.. It functions in the pathway glycan metabolism; L-arabinan degradation. In terms of biological role, alpha-L-arabinofuranosidase involved in the degradation of arabinoxylan, a major component of plant hemicellulose. Acts only on small linear 1,5-alpha-linked L-arabinofuranosyl oligosaccharides. The chain is Probable alpha-L-arabinofuranosidase C (abfC) from Aspergillus terreus (strain NIH 2624 / FGSC A1156).